The sequence spans 1401 residues: Kinesin-like protein KIF27 (1401 aa).

In terms of domain architecture, Kinesin motor spans 5–341; sequence PVKVAVRIRP…LKYANRARNI (337 aa). 84–91 contributes to the ATP binding site; sequence GQTGSGKT. Coiled-coil stretches lie at residues 352 to 413 and 489 to 557; these read ESDR…GYQC and LAAD…KLNL. Residues serine 643, serine 646, serine 672, serine 675, and serine 704 each carry the phosphoserine modification. A disordered region spans residues 643-662; that stretch reads SDNSDDEESEGQEKSGTRCR. Coiled coils occupy residues 705 to 886, 916 to 1070, 1118 to 1154, and 1190 to 1219; these read QELN…IQLK, DHLQ…AAIE, NKVV…LESA, and EGIM…TSRD. The residue at position 999 (serine 999) is a Phosphoserine. The segment covering 1259–1280 has biased composition (basic and acidic residues); the sequence is EELKWASRPESMKLSGREREMD. The tract at residues 1259–1332 is disordered; that stretch reads EELKWASRPE…TETDDNQFTK (74 aa). The span at 1281 to 1292 shows a compositional bias: polar residues; that stretch reads SSASSLRTQPNP. A phosphoserine mark is found at serine 1367 and serine 1389.

It belongs to the TRAFAC class myosin-kinesin ATPase superfamily. Kinesin family. KIF27 subfamily. As to quaternary structure, interacts with STK36. In terms of tissue distribution, testis, pancreatic islet, germ cell tumors and Jurkat T-cells.

It is found in the cytoplasm. The protein localises to the cytoskeleton. It localises to the cell projection. Its subcellular location is the cilium. In terms of biological role, plays an essential role in motile ciliogenesis. This Homo sapiens (Human) protein is Kinesin-like protein KIF27 (KIF27).